The primary structure comprises 448 residues: ATP-dependent protease ATPase subunit HslU (448 aa).

Residues Ile-23, 65–70, Asp-263, Glu-327, and Arg-399 contribute to the ATP site; that span reads GIGKTE.

This sequence belongs to the ClpX chaperone family. HslU subfamily. A double ring-shaped homohexamer of HslV is capped on each side by a ring-shaped HslU homohexamer. The assembly of the HslU/HslV complex is dependent on binding of ATP.

The protein resides in the cytoplasm. Its function is as follows. ATPase subunit of a proteasome-like degradation complex; this subunit has chaperone activity. The binding of ATP and its subsequent hydrolysis by HslU are essential for unfolding of protein substrates subsequently hydrolyzed by HslV. HslU recognizes the N-terminal part of its protein substrates and unfolds these before they are guided to HslV for hydrolysis. The sequence is that of ATP-dependent protease ATPase subunit HslU from Borreliella burgdorferi (strain ATCC 35210 / DSM 4680 / CIP 102532 / B31) (Borrelia burgdorferi).